A 110-amino-acid chain; its full sequence is Transcription factor S (110 aa).

Positions 4, 7, 22, 25, 71, 74, 99, and 102 each coordinate Zn(2+). A C4-type zinc finger spans residues 4–25 (CPKCGNLMLPDRKRKVWVCRSC). Residues 67–107 (TKITCPKCGNDTAYWWEMQTRAGDEPSTIFYKCTKCGHTWR) form a TFIIS-type zinc finger.

This sequence belongs to the archaeal RpoM/eukaryotic RPA12/RPB9/RPC11 RNA polymerase family.

Induces RNA cleavage activity in the RNA polymerase. In its presence, the cleavage activity of the RNA polymerase truncates the RNA back to position +15 in a stepwise manner by releasing mainly dinucleotides from the 3'-end of the nascent RNA. The truncated RNAs are able to continue elongation. Involved in transcriptional proofreading and fidelity. Misincorporation of nucleotides during elongation of transcription leads to arrested elongation complexes which are rescued by TFS-promoted removal of a dinucleotide from the 3'-end. TFS is able to induce a cleavage resynthesis cycle in stalled elongation complexes (resulting from the next missing nucleotide or a reduced incorporation rate of a wrong nucleotide) preventing misincorporation and enabling proofreading in a post-incorporation manner. Pausing of elongation complexes is the main determinant of TFS-induced RNA cleavage. This is Transcription factor S from Thermococcus celer.